Here is a 156-residue protein sequence, read N- to C-terminus: Small ribosomal subunit protein uS7 (156 aa).

Belongs to the universal ribosomal protein uS7 family. In terms of assembly, part of the 30S ribosomal subunit. Contacts proteins S9 and S11.

Functionally, one of the primary rRNA binding proteins, it binds directly to 16S rRNA where it nucleates assembly of the head domain of the 30S subunit. Is located at the subunit interface close to the decoding center, probably blocks exit of the E-site tRNA. The polypeptide is Small ribosomal subunit protein uS7 (Janthinobacterium sp. (strain Marseille) (Minibacterium massiliensis)).